Consider the following 207-residue polypeptide: Methylated-DNA--protein-cysteine methyltransferase (207 aa).

The DNA site is built by Y123 and R137. The active-site Nucleophile; methyl group acceptor is C154. Position 160 (S160) interacts with DNA.

This sequence belongs to the MGMT family.

It is found in the nucleus. It carries out the reaction a 6-O-methyl-2'-deoxyguanosine in DNA + L-cysteinyl-[protein] = S-methyl-L-cysteinyl-[protein] + a 2'-deoxyguanosine in DNA. The enzyme catalyses a 4-O-methyl-thymidine in DNA + L-cysteinyl-[protein] = a thymidine in DNA + S-methyl-L-cysteinyl-[protein]. Functionally, involved in the cellular defense against the biological effects of O6-methylguanine (O6-MeG) and O4-methylthymine (O4-MeT) in DNA. Repairs the methylated nucleobase in DNA by stoichiometrically transferring the methyl group to a cysteine residue in the enzyme. This is a suicide reaction: the enzyme is irreversibly inactivated. The chain is Methylated-DNA--protein-cysteine methyltransferase (MGT1) from Candida glabrata (strain ATCC 2001 / BCRC 20586 / JCM 3761 / NBRC 0622 / NRRL Y-65 / CBS 138) (Yeast).